A 226-amino-acid polypeptide reads, in one-letter code: V-type proton ATPase subunit E (226 aa).

This sequence belongs to the V-ATPase E subunit family. V-ATPase is a heteromultimeric enzyme made up of two complexes: the ATP-hydrolytic V1 complex and the proton translocation V0 complex. The V1 complex consists of three catalytic AB heterodimers that form a heterohexamer, three peripheral stalks each consisting of EG heterodimers, one central rotor including subunits D and F, and the regulatory subunits C and H. The proton translocation complex V0 consists of the proton transport subunit a, a ring of proteolipid subunits c9c'', rotary subunit d, subunits e and f, and the accessory subunits VhaAC45 and ATP6AP2.

Its function is as follows. Subunit of the V1 complex of vacuolar(H+)-ATPase (V-ATPase), a multisubunit enzyme composed of a peripheral complex (V1) that hydrolyzes ATP and a membrane integral complex (V0) that translocates protons. V-ATPase is responsible for acidifying and maintaining the pH of intracellular compartments and in some cell types, is targeted to the plasma membrane, where it is responsible for acidifying the extracellular environment. The chain is V-type proton ATPase subunit E (VHA26) from Manduca sexta (Tobacco hawkmoth).